The following is a 206-amino-acid chain: Peptidyl-tRNA hydrolase (206 aa).

Residue Y19 participates in tRNA binding. The active-site Proton acceptor is H24. The tRNA site is built by Y70, N72, and N118.

Belongs to the PTH family. Monomer.

It localises to the cytoplasm. The catalysed reaction is an N-acyl-L-alpha-aminoacyl-tRNA + H2O = an N-acyl-L-amino acid + a tRNA + H(+). In terms of biological role, hydrolyzes ribosome-free peptidyl-tRNAs (with 1 or more amino acids incorporated), which drop off the ribosome during protein synthesis, or as a result of ribosome stalling. Its function is as follows. Catalyzes the release of premature peptidyl moieties from peptidyl-tRNA molecules trapped in stalled 50S ribosomal subunits, and thus maintains levels of free tRNAs and 50S ribosomes. The sequence is that of Peptidyl-tRNA hydrolase from Prochlorococcus marinus (strain MIT 9313).